The following is an 892-amino-acid chain: MQEKYTPLDVEQAAQSHWTAMDAYRVTEDSSKKKFYACSMLPYPSGKLHMGHVRNYTINDMLTRYLRMNGYNVLMPMGWDAFGLPAENAALKNGVPPAQWTFENIAYMKQQMQAMGLAIDWSREVATCDPSYYKWNQWLFLKMLDKGIAYRKTQVVNWDPVDQTVLANEQVIDGKGWRTGATVEKREIPGYYLKITDYAEELLGQVQTGLPGWPERVKLMQENWIGKSEGVRFAFTHDIRDASGALIDDGRMYVFTTRPDTIKGVTFCAVAPEHPLALHAARGNPALAAFIEECKTGGTTEAELATQEKKGLDTGLIVTHPLTQLPVAVWVGNYVLMSYGDGAVMGVPAHDERDFAFAKKYGLPIKQVVQVDGEQFDYDQWQDWYADKQRGVAINSGSFSGMSFKQAVEAVAHKLAALGLGEKKTTWRLRDWGVSRQRYWGTPIPIIHCPEHGAVPVPEKDLPVVLPQDCVPDGSGNPLHKHEGFHAGVVCPICGVAARRETDTMDTFVDSSWYFMRYCDPKNEKAMVGEGAAYWMPMDQYIGGIEHAILHLLYARFWTKVMRDLGLVKVDEPFTKLLTQGMVLNHIYSRKGENGAKDYFWPNDVENVSDETGKVVAAKLKVAVGNLPAGTLVDYEGIGTMSKSKNNGVDPQDLIERYGADTARLYTMFTAPPEATLEWNDAAVEGSYRFLRRVWNFGIKLSTIDMIAVDESTTGATALNDINFSKEAKVLRLEIHTVLKQVDYDYQRMQYNTVVSGAMKMINALENFKATDSGGAQVALIEGFGILLRCLYPATPHIAHSLWQGLGYAGTLGDLLDAPWPQVDELALLQDEVELMLQINGKLRGAIVVSAGASKVEIELAAIDSEVFRKLANGATPKKVIVVPGRLVNLVV.

Residues 42-52 (PYPSGKLHMGH) carry the 'HIGH' region motif. The 'KMSKS' region motif lies at 640–644 (TMSKS). K643 lines the ATP pocket.

Belongs to the class-I aminoacyl-tRNA synthetase family.

The protein resides in the cytoplasm. The enzyme catalyses tRNA(Leu) + L-leucine + ATP = L-leucyl-tRNA(Leu) + AMP + diphosphate. The protein is Leucine--tRNA ligase of Albidiferax ferrireducens (strain ATCC BAA-621 / DSM 15236 / T118) (Rhodoferax ferrireducens).